We begin with the raw amino-acid sequence, 99 residues long: Large ribosomal subunit protein uL23 (99 aa).

Belongs to the universal ribosomal protein uL23 family. Part of the 50S ribosomal subunit. Contacts protein L29, and trigger factor when it is bound to the ribosome.

Functionally, one of the early assembly proteins it binds 23S rRNA. One of the proteins that surrounds the polypeptide exit tunnel on the outside of the ribosome. Forms the main docking site for trigger factor binding to the ribosome. This Rhodopseudomonas palustris (strain BisB5) protein is Large ribosomal subunit protein uL23.